We begin with the raw amino-acid sequence, 196 residues long: UPF0215 protein MA_4269 (196 aa).

This sequence belongs to the UPF0215 family.

The sequence is that of UPF0215 protein MA_4269 from Methanosarcina acetivorans (strain ATCC 35395 / DSM 2834 / JCM 12185 / C2A).